The primary structure comprises 466 residues: Phosphomethylpyrimidine synthase (466 aa).

Residues asparagine 80, methionine 109, tyrosine 139, histidine 175, 195–197 (SRG), 236–239 (DSLR), and glutamate 275 each bind substrate. Histidine 279 contributes to the Zn(2+) binding site. Substrate is bound at residue tyrosine 302. Histidine 343 is a binding site for Zn(2+). Residues cysteine 423, cysteine 426, and cysteine 431 each coordinate [4Fe-4S] cluster.

Belongs to the ThiC family. Requires [4Fe-4S] cluster as cofactor.

It catalyses the reaction 5-amino-1-(5-phospho-beta-D-ribosyl)imidazole + S-adenosyl-L-methionine = 4-amino-2-methyl-5-(phosphooxymethyl)pyrimidine + CO + 5'-deoxyadenosine + formate + L-methionine + 3 H(+). The protein operates within cofactor biosynthesis; thiamine diphosphate biosynthesis. Its function is as follows. Catalyzes the synthesis of the hydroxymethylpyrimidine phosphate (HMP-P) moiety of thiamine from aminoimidazole ribotide (AIR) in a radical S-adenosyl-L-methionine (SAM)-dependent reaction. This Prochlorococcus marinus (strain NATL2A) protein is Phosphomethylpyrimidine synthase.